We begin with the raw amino-acid sequence, 306 residues long: Ornithine carbamoyltransferase 1, anabolic (306 aa).

Carbamoyl phosphate is bound by residues 53-56, glutamine 80, arginine 104, and 131-134; these read STRT and HPCQ. L-ornithine is bound by residues asparagine 162, aspartate 219, and 223-224; that span reads SM. Residues 259 to 260 and arginine 287 contribute to the carbamoyl phosphate site; that span reads CL.

The protein belongs to the aspartate/ornithine carbamoyltransferase superfamily. OTCase family. As to quaternary structure, homotrimer.

It is found in the cytoplasm. The catalysed reaction is carbamoyl phosphate + L-ornithine = L-citrulline + phosphate + H(+). It functions in the pathway amino-acid biosynthesis; L-arginine biosynthesis; L-arginine from L-ornithine and carbamoyl phosphate: step 1/3. With respect to regulation, reversibly inhibited by inhibited by phaseolotoxin and octicidine. Functionally, reversibly catalyzes the transfer of the carbamoyl group from carbamoyl phosphate (CP) to the N(epsilon) atom of ornithine (ORN) to produce L-citrulline, which is a substrate for argininosuccinate synthetase, the enzyme involved in the final step in arginine biosynthesis. This Pseudomonas savastanoi pv. phaseolicola (Pseudomonas syringae pv. phaseolicola) protein is Ornithine carbamoyltransferase 1, anabolic.